Here is a 420-residue protein sequence, read N- to C-terminus: Histidine--tRNA ligase (420 aa).

The protein belongs to the class-II aminoacyl-tRNA synthetase family. As to quaternary structure, homodimer.

Its subcellular location is the cytoplasm. It catalyses the reaction tRNA(His) + L-histidine + ATP = L-histidyl-tRNA(His) + AMP + diphosphate + H(+). The sequence is that of Histidine--tRNA ligase from Thermotoga petrophila (strain ATCC BAA-488 / DSM 13995 / JCM 10881 / RKU-1).